The sequence spans 189 residues: MKAIDKMTDNPPQEGLSGRKIIYDEDGKPCRSCNTLLDFQYVTGKISNGLKNLSSNGKLAGTGALTGEASELMPGSRTYRKVDPPDVEQLGRSSWTLLHSVAASYPAQPTDQQKGEMKQFLNIFSHIYPCNWCAKDFEKYIRENAPQVESREELGRWMCEAHNKVNKKLRKPKFDCNFWEKRWKDGWDE.

The ERV/ALR sulfhydryl oxidase domain maps to 83–183 (DPPDVEQLGR…FDCNFWEKRW (101 aa)). Residues 88–95 (EQLGRSSW), H99, and Y128 contribute to the FAD site. 2 cysteine pairs are disulfide-bonded: C130/C133 and C159/C176. Residues 159–171 (CEAH…KLRK) and 182–183 (RW) contribute to the FAD site.

In terms of assembly, homodimer. Interacts with MIA40, forming transient intermolecular disulfide bridges. FAD is required as a cofactor.

The protein resides in the mitochondrion intermembrane space. The enzyme catalyses 2 R'C(R)SH + O2 = R'C(R)S-S(R)CR' + H2O2. Its function is as follows. FAD-dependent sulfhydryl oxidase that catalyzes disulfide bond formation. Required for the import and folding of small cysteine-containing proteins in the mitochondrial intermembrane space (IMS). Forms a redox cycle with MIA40 that involves a disulfide relay system. Important for maintaining the cysteine residues in MIA40 in an oxidized state. Reduced ERV1 is reoxidized by cytochrome c. Required for the maturation of cytoplasmic, but not of mitochondrial Fe/S proteins. This is Mitochondrial FAD-linked sulfhydryl oxidase ERV1 (ERV1) from Saccharomyces cerevisiae (strain ATCC 204508 / S288c) (Baker's yeast).